The chain runs to 202 residues: MYDYEELLNRAMSKMPDTETTDARFVIPEPKLFSEGKTTILDNFGNIADTLNRDPDHLMKYLTRELGTAGKIEGTRAVFQGRFTRAQLSDNIQAYVDEYVMCSECGRPDTQLVRVDRVLVLKCSACGAHRPVKKRKVSNVVVREAIEEGGTYELRIDAVGSKGDGIAKIDKYTVFVPGATKGDVVKVKIKKISGNLAFSERA.

Residues 145–202 (AIEEGGTYELRIDAVGSKGDGIAKIDKYTVFVPGATKGDVVKVKIKKISGNLAFSERA) form the TRAM domain.

It belongs to the eIF-2-beta/eIF-5 family. Heterotrimer composed of an alpha, a beta and a gamma chain.

In terms of biological role, eIF-2 functions in the early steps of protein synthesis by forming a ternary complex with GTP and initiator tRNA. This Methanosarcina mazei (strain ATCC BAA-159 / DSM 3647 / Goe1 / Go1 / JCM 11833 / OCM 88) (Methanosarcina frisia) protein is Translation initiation factor 2 subunit beta (eif2b).